The following is a 436-amino-acid chain: UPF0597 protein YhaM (436 aa).

The protein belongs to the UPF0597 family.

This Escherichia coli O6:H1 (strain CFT073 / ATCC 700928 / UPEC) protein is UPF0597 protein YhaM.